We begin with the raw amino-acid sequence, 76 residues long: ATP synthase subunit 9, mitochondrial (76 aa).

A run of 2 helical transmembrane segments spans residues 14–34 (ISTI…AALI) and 48–68 (FPFA…CLMV).

This sequence belongs to the ATPase C chain family. F-type ATPases have 2 components, CF(1) - the catalytic core - and CF(0) - the membrane proton channel. CF(1) has five subunits: alpha(3), beta(3), gamma(1), delta(1), epsilon(1). CF(0) has three main subunits: a, b and c.

It is found in the mitochondrion membrane. In terms of biological role, mitochondrial membrane ATP synthase (F(1)F(0) ATP synthase or Complex V) produces ATP from ADP in the presence of a proton gradient across the membrane which is generated by electron transport complexes of the respiratory chain. F-type ATPases consist of two structural domains, F(1) - containing the extramembraneous catalytic core and F(0) - containing the membrane proton channel, linked together by a central stalk and a peripheral stalk. During catalysis, ATP synthesis in the catalytic domain of F(1) is coupled via a rotary mechanism of the central stalk subunits to proton translocation. Part of the complex F(0) domain. A homomeric c-ring of probably 10 subunits is part of the complex rotary element. The sequence is that of ATP synthase subunit 9, mitochondrial (ATP9) from Cyberlindnera mrakii (Yeast).